Here is a 169-residue protein sequence, read N- to C-terminus: Ureidoglycolate lyase (169 aa).

It belongs to the ureidoglycolate lyase family. In terms of assembly, homodimer. Ni(2+) is required as a cofactor.

The catalysed reaction is (S)-ureidoglycolate = urea + glyoxylate. It participates in nitrogen metabolism; (S)-allantoin degradation. Catalyzes the catabolism of the allantoin degradation intermediate (S)-ureidoglycolate, generating urea and glyoxylate. Involved in the utilization of allantoin as nitrogen source. This is Ureidoglycolate lyase from Pseudomonas paraeruginosa (strain DSM 24068 / PA7) (Pseudomonas aeruginosa (strain PA7)).